Consider the following 117-residue polypeptide: G antigen 13 (117 aa).

The interval 1 to 117 (MSWRGRSTYY…PEEGEKQSQC (117 aa)) is disordered. 2 stretches are compositionally biased toward acidic residues: residues 32-45 (FSDE…EEGE) and 87-96 (ECEDGPDGQE). Over residues 103–117 (EEVKTPEEGEKQSQC) the composition is skewed to basic and acidic residues.

It belongs to the GAGE family.

This is G antigen 13 from Homo sapiens (Human).